A 441-amino-acid polypeptide reads, in one-letter code: Probable dihydroorotase-like protein (441 aa).

Residues 121–140 (VNAHHQPPGDPQAENRPDSA) form a disordered region.

It belongs to the metallo-dependent hydrolases superfamily. DHOase family. PyrC' subfamily.

In terms of biological role, non-functional DHOase. In Synechocystis sp. (strain ATCC 27184 / PCC 6803 / Kazusa), this protein is Probable dihydroorotase-like protein (pyrC').